The following is a 302-amino-acid chain: Ribosomal RNA small subunit methyltransferase H (302 aa).

S-adenosyl-L-methionine contacts are provided by residues 43 to 45 (GGH), aspartate 62, phenylalanine 89, aspartate 105, and histidine 112. The interval 276-302 (EIANNPRSRSAKLRIAEKQAETGDEDN) is disordered.

This sequence belongs to the methyltransferase superfamily. RsmH family.

The protein resides in the cytoplasm. The enzyme catalyses cytidine(1402) in 16S rRNA + S-adenosyl-L-methionine = N(4)-methylcytidine(1402) in 16S rRNA + S-adenosyl-L-homocysteine + H(+). Specifically methylates the N4 position of cytidine in position 1402 (C1402) of 16S rRNA. This is Ribosomal RNA small subunit methyltransferase H from Nostoc sp. (strain PCC 7120 / SAG 25.82 / UTEX 2576).